The following is a 288-amino-acid chain: Quinate/shikimate dehydrogenase (288 aa).

K71 and D107 together coordinate substrate. NAD(+) contacts are provided by residues 132 to 135, 155 to 158, K205, 232 to 235, and G255; these read AGGA, NRRD, and CVYN.

It belongs to the shikimate dehydrogenase family. As to quaternary structure, homodimer.

It catalyses the reaction L-quinate + NAD(+) = 3-dehydroquinate + NADH + H(+). It carries out the reaction L-quinate + NADP(+) = 3-dehydroquinate + NADPH + H(+). The enzyme catalyses shikimate + NADP(+) = 3-dehydroshikimate + NADPH + H(+). The catalysed reaction is shikimate + NAD(+) = 3-dehydroshikimate + NADH + H(+). The protein operates within metabolic intermediate biosynthesis; chorismate biosynthesis; chorismate from D-erythrose 4-phosphate and phosphoenolpyruvate: step 4/7. The actual biological function of YdiB remains unclear, nor is it known whether 3-dehydroshikimate or quinate represents the natural substrate. Catalyzes the reversible NAD-dependent reduction of both 3-dehydroshikimate (DHSA) and 3-dehydroquinate to yield shikimate (SA) and quinate, respectively. It can use both NAD or NADP for catalysis, however it has higher catalytic efficiency with NAD. This chain is Quinate/shikimate dehydrogenase, found in Escherichia coli O17:K52:H18 (strain UMN026 / ExPEC).